The following is a 455-amino-acid chain: Kynurenine 3-monooxygenase (455 aa).

This sequence belongs to the aromatic-ring hydroxylase family. KMO subfamily. FAD serves as cofactor.

The enzyme catalyses L-kynurenine + NADPH + O2 + H(+) = 3-hydroxy-L-kynurenine + NADP(+) + H2O. Its pathway is cofactor biosynthesis; NAD(+) biosynthesis; quinolinate from L-kynurenine: step 1/3. Its function is as follows. Catalyzes the hydroxylation of L-kynurenine (L-Kyn) to form 3-hydroxy-L-kynurenine (L-3OHKyn). Required for synthesis of quinolinic acid. This is Kynurenine 3-monooxygenase from Xanthomonas oryzae pv. oryzae (strain KACC10331 / KXO85).